The chain runs to 339 residues: DNA-directed RNA polymerase subunit alpha (339 aa).

The interval 1 to 235 is alpha N-terminal domain (alpha-NTD); sequence MVIQKNWQEL…DQLQIFVNFE (235 aa). The interval 251–339 is alpha C-terminal domain (alpha-CTD); that stretch reads FNPALLKKVD…DLAKRFEEHY (89 aa).

This sequence belongs to the RNA polymerase alpha chain family. As to quaternary structure, homodimer. The RNAP catalytic core consists of 2 alpha, 1 beta, 1 beta' and 1 omega subunit. When a sigma factor is associated with the core the holoenzyme is formed, which can initiate transcription.

The catalysed reaction is RNA(n) + a ribonucleoside 5'-triphosphate = RNA(n+1) + diphosphate. Functionally, DNA-dependent RNA polymerase catalyzes the transcription of DNA into RNA using the four ribonucleoside triphosphates as substrates. This chain is DNA-directed RNA polymerase subunit alpha, found in Methylobacterium sp. (strain 4-46).